The primary structure comprises 158 residues: Non-secretory ribonuclease (158 aa).

The first 27 residues, 1–27 (MVPKLFTSQICLLLLLGLSSLEVSLHA), serve as a signal peptide directing secretion. C-linked (Man) tryptophan glycosylation is present at Trp-34. His-42 functions as the Proton acceptor in the catalytic mechanism. A 3'-nitrotyrosine modification is found at Tyr-60. 65-69 (KNRNT) serves as a coordination point for substrate. N-linked (GlcNAc...) asparagine glycosylation is found at Asn-86, Asn-92, and Asn-111. His-153 functions as the Proton donor in the catalytic mechanism.

This sequence belongs to the pancreatic ribonuclease family. As to quaternary structure, interacts with and forms a tight 1:1 complex with RNH1. Dimerization of two such complexes may occur.

The protein localises to the lysosome. The protein resides in the cytoplasmic granule. The enzyme catalyses an [RNA] containing cytidine + H2O = an [RNA]-3'-cytidine-3'-phosphate + a 5'-hydroxy-ribonucleotide-3'-[RNA].. It carries out the reaction an [RNA] containing uridine + H2O = an [RNA]-3'-uridine-3'-phosphate + a 5'-hydroxy-ribonucleotide-3'-[RNA].. Its function is as follows. This is a non-secretory ribonuclease. It is a pyrimidine specific nuclease with a slight preference for U. Cytotoxin and helminthotoxin. Possesses a wide variety of biological activities. The chain is Non-secretory ribonuclease (RNASE2) from Saguinus labiatus (Red-chested mustached tamarin).